Reading from the N-terminus, the 552-residue chain is MAKFIFVTGGVVSSIGKGIVAASLGRLLKSRDYSVSILKLDPYINVDPGTMSPFQHGEVFVTEDGAETDLDLGHYERFTDTSMSRLNSVTTGSIYQAVINKERRGDYQGGTVQVIPHITNEIKERIFRVAENTNPDFVITEIGGTVGDIESLPFLEAIRQFRKEAGRDNVLYMHVTLIPWISSAGEMKTKPTQHSVKELRSIGIQPDVLVCRCDRPLPQGQREKISEFCNVPEEQVITSQDASSIYEVPLMLEREGLAEQTLKLLRMEPRQPNLEQWQNLVERMKRPNRHMDIAIVGKYVQLNDAYLSVVESLGHAAIANDMDIKLHWVNAEDIEKHGASMYLADMAGIVVPGGFGLRGVDGKVAAIEYARLNQIPFLGLCLGMQSSVIEWARNVAKLEDAHSAEFNPEAKNPVINLLPEQRDVVDLGGTMRLGLYPCRLTPDTLTYQLYGQEVIYERHRHRYEFNNAYRSLFLETGYQVSGTSPDGRLVEIIEYADHPFFIATQFHPEFQSRPNHPHPLFFGFIQAAGNHKSQPISDELDNQSTEMSISLS.

The tract at residues 1 to 267 is amidoligase domain; that stretch reads MAKFIFVTGG…AEQTLKLLRM (267 aa). CTP is bound at residue Ser13. Position 13 (Ser13) interacts with UTP. ATP-binding positions include 14–19 and Asp71; that span reads SIGKGI. Asp71 and Glu141 together coordinate Mg(2+). Residues 148–150, 188–193, and Lys224 contribute to the CTP site; these read DIE and KTKPTQ. UTP is bound by residues 188-193 and Lys224; that span reads KTKPTQ. Residues 292-534 form the Glutamine amidotransferase type-1 domain; it reads DIAIVGKYVQ…IQAAGNHKSQ (243 aa). Gly354 serves as a coordination point for L-glutamine. Residue Cys381 is the Nucleophile; for glutamine hydrolysis of the active site. Residues 382–385, Glu405, and Arg462 each bind L-glutamine; that span reads LGMQ. Active-site residues include His507 and Glu509. A disordered region spans residues 533 to 552; that stretch reads SQPISDELDNQSTEMSISLS.

Belongs to the CTP synthase family. Homotetramer.

It catalyses the reaction UTP + L-glutamine + ATP + H2O = CTP + L-glutamate + ADP + phosphate + 2 H(+). The catalysed reaction is L-glutamine + H2O = L-glutamate + NH4(+). The enzyme catalyses UTP + NH4(+) + ATP = CTP + ADP + phosphate + 2 H(+). It participates in pyrimidine metabolism; CTP biosynthesis via de novo pathway; CTP from UDP: step 2/2. With respect to regulation, allosterically activated by GTP, when glutamine is the substrate; GTP has no effect on the reaction when ammonia is the substrate. The allosteric effector GTP functions by stabilizing the protein conformation that binds the tetrahedral intermediate(s) formed during glutamine hydrolysis. Inhibited by the product CTP, via allosteric rather than competitive inhibition. Catalyzes the ATP-dependent amination of UTP to CTP with either L-glutamine or ammonia as the source of nitrogen. Regulates intracellular CTP levels through interactions with the four ribonucleotide triphosphates. The chain is CTP synthase from Picosynechococcus sp. (strain ATCC 27264 / PCC 7002 / PR-6) (Agmenellum quadruplicatum).